A 285-amino-acid chain; its full sequence is Probable endonuclease 4 (285 aa).

9 residues coordinate Zn(2+): H69, H109, E145, D179, H182, H216, D229, H231, and E261.

The protein belongs to the AP endonuclease 2 family. The cofactor is Zn(2+).

It carries out the reaction Endonucleolytic cleavage to 5'-phosphooligonucleotide end-products.. Functionally, endonuclease IV plays a role in DNA repair. It cleaves phosphodiester bonds at apurinic or apyrimidinic (AP) sites, generating a 3'-hydroxyl group and a 5'-terminal sugar phosphate. This Salmonella paratyphi A (strain AKU_12601) protein is Probable endonuclease 4.